The primary structure comprises 265 residues: Pancreas transcription factor 1 subunit alpha (265 aa).

The 53-residue stretch at 115 to 167 (QLRQAANVRERRRMQSINDAFEGLRSHIPTLPYEKRLSKVDTLRLAIGYINFL) folds into the bHLH domain.

Its subcellular location is the nucleus. In terms of biological role, transcription factor implicated in the cell fate determination in various organs. Binds to the E-box consensus sequence 5'-CANNTG-3'. Required for exocrine pancreatic development. Plays a central role in directing the differentiation of retinal progenitors towards horizontal and amacrine fates. This Danio rerio (Zebrafish) protein is Pancreas transcription factor 1 subunit alpha (ptf1a).